A 57-amino-acid chain; its full sequence is MDQTNLLTLEQELKLAIYKQKIYTLNVYNMKQHLRDILKQMMIKENTIKYFIKNSIT.

This sequence belongs to the ycf18/nblA family.

It localises to the plastid. The protein resides in the chloroplast. This is an uncharacterized protein from Aglaothamnion neglectum (Red alga).